The chain runs to 340 residues: MAASEEELLLPRLPELFETSKKLLEELEVATEPTGSRTIQDKVSKGLELLEKAAGMLSQLDLFSRNEDLEEIASIDLKYLMVPALQGALTMKQVNPSKRLDHLQRAREHFIHFLTQCHCYHVAEFQLPQTKNNSAENNTARSSMAYPNLVAMASQRQAKIERYKQKKEVEHRLSALKSAVESGQADDERVREYYLLHLRRWIGISLEEIESIDQEIKILKDKDSPREESACQSSLPEKPPMKPFILTRNKAQAKVFGTGYPSLATMTVSDWYEQHQKYGALPDRGIAKPPSADFQRAAQQQEDQEQKDEENEEKALHRMREWDDWKDTHPRGYGNRQNMG.

The UIM domain occupies 47–61; that stretch reads LELLEKAAGMLSQLD. The segment at 99–203 is interaction with PPP2CA; the sequence is RLDHLQRARE…YLLHLRRWIG (105 aa). 2 disordered regions span residues 221-242 and 281-340; these read DKDSPREESACQSSLPEKPPMK and LPDR…QNMG. Residues 226–291 are interaction with MID1; sequence REESACQSSL…PDRGIAKPPS (66 aa). K242 is subject to N6-acetyllysine. A compositionally biased stretch (low complexity) spans 292–301; that stretch reads ADFQRAAQQQ. Positions 302 to 312 are enriched in acidic residues; it reads EDQEQKDEENE. The segment covering 313 to 330 has biased composition (basic and acidic residues); sequence EKALHRMREWDDWKDTHP.

It belongs to the IGBP1/TAP42 family. Interacts with partially folded PPP2CA, but not with the fully active protein. Interacts with PPP2CB, and with PP4 and PP6. Interacts with MID1 and MID2. Interacts with ubiquitin. In terms of processing, phosphorylated. Monoubiquitination by MID1 triggers calpain-mediated cleavage and switches IGBP1 activity from protective to destructive.

The protein resides in the cytoplasm. Its function is as follows. Associated to surface IgM-receptor; may be involved in signal transduction. Involved in regulation of the catalytic activity of the phosphatases PP2A, PP4 and PP6 by protecting their partially folded catalytic subunits from degradative polyubiquitination until they associate with regulatory subunits. This is Immunoglobulin-binding protein 1 (Igbp1) from Rattus norvegicus (Rat).